A 786-amino-acid polypeptide reads, in one-letter code: DNA ligase (786 aa).

NAD(+) is bound by residues 32-36 (DAEYD), 81-82 (SL), and Glu121. Residue Lys123 is the N6-AMP-lysine intermediate of the active site. Arg144, Glu181, Lys297, and Lys321 together coordinate NAD(+). Zn(2+) contacts are provided by Cys415, Cys418, Cys445, and Cys451. The BRCT domain occupies 703-786 (AEGLPLAGQT…EQLKSYGIEA (84 aa)).

Belongs to the NAD-dependent DNA ligase family. LigA subfamily. The cofactor is Mg(2+). Mn(2+) is required as a cofactor.

The catalysed reaction is NAD(+) + (deoxyribonucleotide)n-3'-hydroxyl + 5'-phospho-(deoxyribonucleotide)m = (deoxyribonucleotide)n+m + AMP + beta-nicotinamide D-nucleotide.. Its function is as follows. DNA ligase that catalyzes the formation of phosphodiester linkages between 5'-phosphoryl and 3'-hydroxyl groups in double-stranded DNA using NAD as a coenzyme and as the energy source for the reaction. It is essential for DNA replication and repair of damaged DNA. The polypeptide is DNA ligase (Ectopseudomonas mendocina (strain ymp) (Pseudomonas mendocina)).